Reading from the N-terminus, the 268-residue chain is Ribosomal RNA small subunit methyltransferase A (268 aa).

Residues N16, L18, G43, E64, D89, and N110 each contribute to the S-adenosyl-L-methionine site.

Belongs to the class I-like SAM-binding methyltransferase superfamily. rRNA adenine N(6)-methyltransferase family. RsmA subfamily.

The protein localises to the cytoplasm. It catalyses the reaction adenosine(1518)/adenosine(1519) in 16S rRNA + 4 S-adenosyl-L-methionine = N(6)-dimethyladenosine(1518)/N(6)-dimethyladenosine(1519) in 16S rRNA + 4 S-adenosyl-L-homocysteine + 4 H(+). Its function is as follows. Specifically dimethylates two adjacent adenosines (A1518 and A1519) in the loop of a conserved hairpin near the 3'-end of 16S rRNA in the 30S particle. May play a critical role in biogenesis of 30S subunits. This Pseudomonas syringae pv. tomato (strain ATCC BAA-871 / DC3000) protein is Ribosomal RNA small subunit methyltransferase A.